Reading from the N-terminus, the 65-residue chain is VESP-VB1 (65 aa).

An N-terminal signal peptide occupies residues 1–23; it reads MKMSILFLFALIASLACLQLTFA. AXPX repeat units follow at residues 23–26, 27–30, 31–34, 35–38, 39–42, 43–46, and 47–50; these read AAPA, ASPL, ANPG, ASPE, AAPL, ADPL, and ADPF. Positions 24-49 are excised as a propeptide; that stretch reads APAASPLANPGASPEAAPLADPLADP. Leucine 62 is subject to Leucine amide.

In terms of tissue distribution, expressed by the venom gland.

It localises to the secreted. In terms of biological role, antimicrobial peptide. Shows activity against both Gram-positive (S.aureus MIC=1.0-3.75 ug/ml) and -negative (E.coli MIC=7.5-15 ug/ml) bacteria, as well against fungi (C.albicans MIC=30 ug/ml). Also promotes important mast cell degranulation. Shows little hemolytic activity on rabbit and human erythrocytes. Its mast cell degranulation activity may be related to the activation of G-protein coupled receptors in mast cells as well as interaction with other proteins located in cell endosomal membranes in the mast cells. The sequence is that of VESP-VB1 from Vespa bicolor (Black shield wasp).